The primary structure comprises 197 residues: ATP-dependent Clp protease proteolytic subunit 2 (197 aa).

S97 acts as the Nucleophile in catalysis. H122 is an active-site residue.

Belongs to the peptidase S14 family. As to quaternary structure, fourteen ClpP subunits assemble into 2 heptameric rings which stack back to back to give a disk-like structure with a central cavity, resembling the structure of eukaryotic proteasomes.

It is found in the cytoplasm. The enzyme catalyses Hydrolysis of proteins to small peptides in the presence of ATP and magnesium. alpha-casein is the usual test substrate. In the absence of ATP, only oligopeptides shorter than five residues are hydrolyzed (such as succinyl-Leu-Tyr-|-NHMec, and Leu-Tyr-Leu-|-Tyr-Trp, in which cleavage of the -Tyr-|-Leu- and -Tyr-|-Trp bonds also occurs).. In terms of biological role, cleaves peptides in various proteins in a process that requires ATP hydrolysis. Has a chymotrypsin-like activity. Plays a major role in the degradation of misfolded proteins. In Leptospira interrogans serogroup Icterohaemorrhagiae serovar copenhageni (strain Fiocruz L1-130), this protein is ATP-dependent Clp protease proteolytic subunit 2.